The primary structure comprises 3969 residues: Histone-lysine N-methyltransferase 2A (3969 aa).

Disordered regions lie at residues 1-108 (MAHS…LLRV), 132-253 (VFGE…EDSL), and 301-352 (RRRG…RQSP). A Menin-binding motif (MBM) motif is present at residues 6 to 25 (RWRFPARPGTTGGGGGGGRR). Gly residues predominate over residues 15–29 (TTGGGGGGGRRGLGG). Low complexity-rich tracts occupy residues 59-69 (AVAAAAAAAGS) and 77-104 (GAAA…SGPA). Residues 123–134 (GTNLRRFRAVFG) carry the Integrase domain-binding motif 1 (IBM1) motif. A phosphoserine; by CK2 mark is found at serine 136 and serine 142. The Integrase domain-binding motif 2 (IBM2) signature appears at 147-152 (QFLGFG). Serine 153 carries the post-translational modification Phosphoserine. Residues 169-180 (KTSPRKPRGRPR) constitute a DNA-binding region (a.T hook 1). Residue serine 197 is modified to Phosphoserine. Basic and acidic residues-rich tracts occupy residues 202–220 (SETK…SIEK) and 237–253 (HGKD…EDSL). Positions 217-227 (SIEKKRGRPPT) form a DNA-binding region, a.T hook 2. N6-acetyllysine is present on lysine 239. The segment at residues 301–309 (RRRGRPPST) is a DNA-binding region (a.T hook 3). A compositionally biased stretch (basic and acidic residues) spans 323–347 (ELEKPQKVRKDKEGTPPLTKEDKTV). The residue at position 373 (lysine 373) is an N6-acetyllysine. A disordered region spans residues 445–585 (STPNSRFSAP…SSISDHTPWL (141 aa)). The segment covering 452–491 (SAPSCGSSEKSSAASQHSSQMSSDSSRSSSPSVDTSTDSQ) has biased composition (low complexity). Serine 518 carries the phosphoserine modification. Residues 546–559 (LSTLQSAPQQQTSS) show a composition bias toward low complexity. Over residues 560–573 (SPPPPLLTPPPPLQ) the composition is skewed to pro residues. An N6-acetyllysine modification is found at lysine 636. Serine 680 is modified (phosphoserine). 4 disordered regions span residues 713-780 (ESVT…SSSL), 798-949 (FPSH…TSVT), 1038-1066 (EKSK…VRGP), and 1106-1166 (SSMG…VPED). Over residues 716–732 (TLPSNRTSAGTSSSGVS) the composition is skewed to polar residues. The segment covering 762–780 (LSSSELSPLTPPSSVSSSL) has biased composition (low complexity). Residues 798–808 (FPSHSLTQSGE) are compositionally biased toward polar residues. The segment covering 820–841 (TSAPAEPFSSSSPTPLFPWFTP) has biased composition (low complexity). At threonine 840 the chain carries Phosphothreonine. Residues 846–890 (ERGRNKDKAPEELSKDRDADKSVEKDKSRERDREREKENKRESRK) show a composition bias toward basic and acidic residues. Phosphoserine occurs at positions 926 and 1056. The span at 1043–1062 (LKQTDQPKAQGQESDSSETS) shows a compositional bias: polar residues. Lysine 1130 carries the N6-acetyllysine modification. The segment at 1147–1195 (KKGRRSRRCGQCPGCQVPEDCGVCTNCLDKPKFGGRNIKKQCCKMRKCQ) adopts a CXXC-type zinc-finger fold. Residues cysteine 1155, cysteine 1158, cysteine 1161, cysteine 1167, cysteine 1170, cysteine 1173, cysteine 1189, and cysteine 1194 each coordinate Zn(2+). The disordered stretch occupies residues 1200–1375 (MPSKAYLQKQ…PPVNKQENAG (176 aa)). A compositionally biased stretch (basic and acidic residues) spans 1220–1232 (SKTSEKKDSKESS). Positions 1233 to 1243 (VVKNVVDSSQK) are enriched in low complexity. Position 1235 is an N6-acetyllysine (lysine 1235). Basic and acidic residues predominate over residues 1248–1273 (AREDPAPKKSSSEPPPRKPVEEKSEE). Polar residues predominate over residues 1284-1300 (KQATTPASRKSSKQVSQ). Pro residues predominate over residues 1304-1313 (VIPPQPPTTG). PHD-type zinc fingers lie at residues 1431-1482 (RVVC…CKFC), 1479-1533 (CKFC…CVRC), and 1566-1627 (GNFC…CTER). Residues 1584–1600 (KMMQCGKCDRWVHSKCE) form an interaction with histone H3K4me3 region. One can recognise a Bromo domain in the interval 1635 to 1765 (ALEKELQISL…SFFIRQMERV (131 aa)). 2 disordered regions span residues 1663-1713 (YRQA…GVKR) and 1806-1869 (QERE…GIED). Residues 1826–1847 (APKPKGPGEPDSPTPLHPPTPP) are compositionally biased toward pro residues. The residue at position 1837 (serine 1837) is a Phosphoserine. Threonine 1845 bears the Phosphothreonine mark. Serine 1858 carries the phosphoserine modification. The C2HC pre-PHD-type zinc finger occupies 1870–1910 (NRQCALCLTYGDDSANDAGRLLYIGQNEWTHVNCALWSAEV). A PHD-type 4 zinc finger spans residues 1931–1978 (LRCEFCQKPGATVGCCLTSCTSNYHFMCSRAKNCVFLDDKKVYCQRHR). The region spanning 2018-2074 (NIHMMIGSMTIDCLGILNDLSDCEDKLFPIGYQCSRVYWSTTDARKRCVYTCKIVEC) is the FYR N-terminal domain. 7 disordered regions span residues 2081 to 2133 (PDIN…TSGS), 2145 to 2232 (IRTP…TTGT), 2275 to 2333 (NKNS…KLAP), 2373 to 2460 (RGQR…EGNL), 2475 to 2618 (GQRP…RYPR), 2647 to 2675 (FYSS…STSD), and 2713 to 2821 (KISQ…KNLL). The segment covering 2095 to 2115 (IAHSPTSFTESSSKESQNTAE) has biased composition (polar residues). A Phosphoserine modification is found at serine 2098. Phosphothreonine is present on threonine 2147. Serine 2151 and serine 2201 each carry phosphoserine. Over residues 2214 to 2232 (RTGNTYSRNNVSSVSTTGT) the composition is skewed to polar residues. Residues 2283–2302 (SSSSEMKQSSASDLVSKSSS) are compositionally biased toward low complexity. 2 stretches are compositionally biased toward polar residues: residues 2310–2319 (VLSSKSSEGS) and 2406–2421 (GMSN…MGSS). The segment covering 2432–2442 (SCKETFKEKHS) has biased composition (basic and acidic residues). A Phosphothreonine modification is found at threonine 2525. Lysine 2528 is covalently cross-linked (Glycyl lysine isopeptide (Lys-Gly) (interchain with G-Cter in SUMO2)). Composition is skewed to polar residues over residues 2543–2563 (SPAS…SASE) and 2573–2592 (PSPN…QNLP). Serine 2611 is modified (phosphoserine). The span at 2726-2741 (SDTSVTATTRKSSQIP) shows a compositional bias: polar residues. A compositionally biased stretch (basic and acidic residues) spans 2744 to 2782 (NGKENGTENLKIDRPEDAGEKEHVTKSSVGHKNEPKMDN). Residues 2784–2795 (HSVSRVKTQGQD) show a composition bias toward polar residues. Serine 2796 carries the phosphoserine modification. A compositionally biased stretch (low complexity) spans 2796 to 2805 (SLEAQLSSLE). Over residues 2812 to 2821 (TSTPSDKNLL) the composition is skewed to polar residues. The 9aaTAD signature appears at 2847-2855 (SDIMDFVLK). Position 2955 is a phosphoserine (serine 2955). Lysine 2958 carries the N6-acetyllysine modification. Disordered stretches follow at residues 2961-3064 (TITE…NAAV) and 3166-3244 (PAAT…SNIA). 2 stretches are compositionally biased toward polar residues: residues 2963-2972 (TEKSVASSES) and 3016-3030 (HGNN…STPG). The residue at position 3036 (serine 3036) is a Phosphoserine. Polar residues predominate over residues 3039-3064 (VPIQNQKYVPNSTDSPGPSQISNAAV). Positions 3171 to 3182 (SSFPPNISNPPS) are enriched in low complexity. Residues 3198–3216 (VSESSQRTDLSTTVATPSS) are compositionally biased toward polar residues. Residues 3218 to 3233 (LKKRPISRLQTRKNKK) are compositionally biased toward basic residues. Position 3372 is a phosphothreonine (threonine 3372). Lysine 3462 is modified (N6-acetyllysine). Disordered stretches follow at residues 3464–3608 (GIHS…GQPA) and 3620–3643 (TQNP…SNFS). The span at 3476–3489 (SGPQVSNFTQTVDA) shows a compositional bias: polar residues. Residues 3508–3529 (SPTSPGGSPSSPSSGQRSASPS) are compositionally biased toward low complexity. 3 positions are modified to phosphoserine: serine 3511, serine 3515, and serine 3527. Residues 3591 to 3603 (QDTASVEQSSQKE) are compositionally biased toward polar residues. Residues 3666–3747 (KKGLVFEISS…KHCRNYKFRF (82 aa)) form the FYR C-terminal domain. The WDR5 interaction motif (WIN) signature appears at 3762 to 3767 (GSARAE). Residues 3785–3808 (HRQPPEYNPNDEEEEEVQLKSARR) form a disordered region. The 117-residue stretch at 3829 to 3945 (EAVGVYRSPI…RGEELTYDYK (117 aa)) folds into the SET domain. Residues histidine 3839 and arginine 3841 each contribute to the S-adenosyl-L-methionine site. Residue cysteine 3882 is modified to S-methylcysteine; by autocatalysis. S-adenosyl-L-methionine contacts are provided by residues tyrosine 3883 and 3906–3907 (NH). Zn(2+)-binding residues include cysteine 3909 and cysteine 3957. The region spanning 3953 to 3969 (NKLPCNCGAKKCRKFLN) is the Post-SET domain. Asparagine 3958 is a binding site for S-adenosyl-L-methionine. Zn(2+)-binding residues include cysteine 3959 and cysteine 3964.

It belongs to the class V-like SAM-binding methyltransferase superfamily. Histone-lysine methyltransferase family. TRX/MLL subfamily. As to quaternary structure, MLL cleavage product N320 heterodimerizes with MLL cleavage product C180 (via SET and FYRC domains). Component of some MLL1/MLL complex, at least composed of the core components KMT2A/MLL1, ASH2L, HCFC1/HCF1, HCFC2, WDR5, DPY30 and RBBP5, as well as the facultative components BACC1, CHD8, E2F6, HSP70, INO80C, KANSL1, LAS1L, MAX, MCRS1, MEN1, MGA, KAT8/MOF, PELP1, PHF20, PRP31, RING2, RUVB1/TIP49A, RUVB2/TIP49B, SENP3, TAF1, TAF4, TAF6, TAF7, TAF9 and TEX10. Forms a core complex with the evolutionary conserved subcomplex WRAD composed of WDR5, RBBP5, ASH2L/ASH2 and DPY30 subunits; WRAD differentially stimulates the methyltransferase activity. Interacts (via WIN motif) with WDR5; the interaction is direct. Interaction with WDR5 is required for stable interaction with ASH2L and RBBP5, and thereby also for optimal histone methyltransferase activity. Interacts with KAT8/MOF; the interaction is direct. Interacts with SBF1 and PPP1R15A. Interacts with ZNF335. Interacts with CLOCK and BMAL1 in a circadian manner. Interacts with PPIE; this results in decreased histone H3 methyltransferase activity. Interacts with CREBBP. Interacts with the WRAD complex composed of WDR5, RBBP5, ASH2L and DPY30. Interacts (via MBM motif) with MEN1. Interacts (via IBM motifs) with PSIP1 (via IBD domain) with moderate affinity whereas the KMT2A-MEN1 complex interacts with a greater affinity; MEN1 enhances interaction of KMT2A with PSIP1. Phosphorylation increases its affinity for PSIP1. Forms a complex with CREBBP and CREB1. (Microbial infection) Interacts with herpes virus 8/HHV-8 protein LANA1; this interaction regulates the MLL1 histone methyltransferase activity on viral DNA. In terms of processing, proteolytic cleavage by TASP1 generates MLL cleavage product N320 and MLL cleavage product C180, which reassemble through a non-covalent association. 2 cleavage sites exist, cleavage site 1 (CS1) and cleavage site 2 (CS2), to generate MLL cleavage products N320 and C180. CS2 is the major site. Phosphorylation increases its interaction with PSIP1. Post-translationally, auto-methylated at Cys-3882: auto-methylation is inhibited by the WRAD complex and unmodified histone H3. Heart, lung, brain and T- and B-lymphocytes.

It localises to the nucleus. It carries out the reaction L-lysyl(4)-[histone H3] + S-adenosyl-L-methionine = N(6)-methyl-L-lysyl(4)-[histone H3] + S-adenosyl-L-homocysteine + H(+). It catalyses the reaction N(6)-methyl-L-lysyl(4)-[histone H3] + S-adenosyl-L-methionine = N(6),N(6)-dimethyl-L-lysyl(4)-[histone H3] + S-adenosyl-L-homocysteine + H(+). The catalysed reaction is L-cysteinyl-[protein] + S-adenosyl-L-methionine = S-methyl-L-cysteinyl-[protein] + S-adenosyl-L-homocysteine + H(+). Functionally, histone methyltransferase that plays an essential role in early development and hematopoiesis. Catalytic subunit of the MLL1/MLL complex, a multiprotein complex that mediates both methylation of 'Lys-4' of histone H3 (H3K4me) complex and acetylation of 'Lys-16' of histone H4 (H4K16ac). Catalyzes methyl group transfer from S-adenosyl-L-methionine to the epsilon-amino group of 'Lys-4' of histone H3 (H3K4) via a non-processive mechanism. Part of chromatin remodeling machinery predominantly forms H3K4me1 and H3K4me2 methylation marks at active chromatin sites where transcription and DNA repair take place. Has weak methyltransferase activity by itself, and requires other component of the MLL1/MLL complex to obtain full methyltransferase activity. Has no activity toward histone H3 phosphorylated on 'Thr-3', less activity toward H3 dimethylated on 'Arg-8' or 'Lys-9', while it has higher activity toward H3 acetylated on 'Lys-9'. Binds to unmethylated CpG elements in the promoter of target genes and helps maintain them in the nonmethylated state. Required for transcriptional activation of HOXA9. Promotes PPP1R15A-induced apoptosis. Plays a critical role in the control of circadian gene expression and is essential for the transcriptional activation mediated by the CLOCK-BMAL1 heterodimer. Establishes a permissive chromatin state for circadian transcription by mediating a rhythmic methylation of 'Lys-4' of histone H3 (H3K4me) and this histone modification directs the circadian acetylation at H3K9 and H3K14 allowing the recruitment of CLOCK-BMAL1 to chromatin. Also has auto-methylation activity on Cys-3882 in absence of histone H3 substrate. The protein is Histone-lysine N-methyltransferase 2A (KMT2A) of Homo sapiens (Human).